We begin with the raw amino-acid sequence, 473 residues long: Protein TED1 (473 aa).

Over 1–8 (MLRCAVKK) the chain is Cytoplasmic. Residues 9-29 (FAYFATFLTIVANIYIYTYPS) traverse the membrane as a helical segment. The Lumenal segment spans residues 30-451 (FHPEQCSWNC…FSLCPFAIQH (422 aa)). N38, N147, N229, N266, and N307 each carry an N-linked (GlcNAc...) asparagine glycan. Residues 452–472 (VWWFAKVSLLVTIFTWSSLLF) form a helical membrane-spanning segment. Residue V473 is a topological domain, cytoplasmic.

Post-translationally, N-glycosylated.

It localises to the endoplasmic reticulum membrane. Its function is as follows. Acts together with EMP24 and ERV25 in cargo exit from the endoplasmic reticulum. This is Protein TED1 (TED1) from Saccharomyces cerevisiae (strain ATCC 204508 / S288c) (Baker's yeast).